A 198-amino-acid chain; its full sequence is Glycerol-3-phosphate acyltransferase 2 (198 aa).

The next 4 membrane-spanning stretches (helical) occupy residues 4–24, 71–91, 113–133, and 147–167; these read TYLL…LVVG, LPMV…AVLG, LLCY…TLLF, and VVAV…AMCL.

Belongs to the PlsY family. In terms of assembly, probably interacts with PlsX.

The protein resides in the cell membrane. The catalysed reaction is an acyl phosphate + sn-glycerol 3-phosphate = a 1-acyl-sn-glycero-3-phosphate + phosphate. The protein operates within lipid metabolism; phospholipid metabolism. Its function is as follows. Catalyzes the transfer of an acyl group from acyl-phosphate (acyl-PO(4)) to glycerol-3-phosphate (G3P) to form lysophosphatidic acid (LPA). This enzyme utilizes acyl-phosphate as fatty acyl donor, but not acyl-CoA or acyl-ACP. This chain is Glycerol-3-phosphate acyltransferase 2, found in Bacillus cereus (strain ZK / E33L).